A 751-amino-acid chain; its full sequence is Myb-related protein A (751 aa).

Residues 1–22 form a disordered region; sequence MAKRSRSEDEDDDLQYADHDYE. 3 consecutive HTH myb-type domains span residues 30–81, 82–137, and 138–188; these read KKLW…QKVL, NPEL…NPEV, and KKSS…RRKV. 3 DNA-binding regions (H-T-H motif) span residues 58 to 81, 110 to 133, and 161 to 184; these read WTLI…QKVL, WSLI…HNHL, and WAEI…NSTM. A Glycyl lysine isopeptide (Lys-Gly) (interchain with G-Cter in SUMO2) cross-link involves residue K199. Residues 230–294 are transcriptional activation domain; it reads IPGYQYVSPD…RLPPQPGSFS (65 aa). The interval 297–552 is negative regulatory domain; it reads SGSFLMDDSM…IRRSILGTTP (256 aa). At K393 the chain carries N6-acetyllysine. Residues K591 and K601 each participate in a glycyl lysine isopeptide (Lys-Gly) (interchain with G-Cter in SUMO2) cross-link.

In terms of assembly, component of the DREAM complex (also named LINC complex) at least composed of E2F4, E2F5, LIN9, LIN37, LIN52, LIN54, MYBL1, MYBL2, RBL1, RBL2, RBBP4, TFDP1 and TFDP2. The complex exists in quiescent cells where it represses cell cycle-dependent genes. It dissociates in S phase when LIN9, LIN37, LIN52 and LIN54 form a subcomplex that binds to MYBL2. Predominantly in the testis. Very low levels in the ovaries, spleen and brain.

The protein resides in the nucleus. Functionally, transcription factor that specifically recognizes the sequence 5'-YAAC[GT]G-3'. Acts as a master regulator of male meiosis by promoting expression of piRNAs: activates expression of both piRNA precursor RNAs and expression of protein-coding genes involved in piRNA metabolism, such as PIWIL1. The piRNA metabolic process mediates the repression of transposable elements during meiosis by forming complexes composed of piRNAs and Piwi proteins and governs the methylation and subsequent repression of transposons, which is essential for the germline integrity. Transcriptional activator of SOX30. The protein is Myb-related protein A (Mybl1) of Mus musculus (Mouse).